We begin with the raw amino-acid sequence, 382 residues long: 1-deoxy-D-xylulose 5-phosphate reductoisomerase (382 aa).

The NADPH site is built by Thr-10, Gly-11, Ser-12, Ile-13, Gly-36, and Asn-122. Lys-123 provides a ligand contact to 1-deoxy-D-xylulose 5-phosphate. Glu-124 lines the NADPH pocket. A Mn(2+)-binding site is contributed by Asp-148. 1-deoxy-D-xylulose 5-phosphate is bound by residues Ser-149, Glu-150, Ser-174, and His-197. Glu-150 is a Mn(2+) binding site. Position 203 (Gly-203) interacts with NADPH. Residues Ser-210, Asn-215, Lys-216, and Glu-219 each coordinate 1-deoxy-D-xylulose 5-phosphate. Residue Glu-219 coordinates Mn(2+).

This sequence belongs to the DXR family. Mg(2+) serves as cofactor. Requires Mn(2+) as cofactor.

The catalysed reaction is 2-C-methyl-D-erythritol 4-phosphate + NADP(+) = 1-deoxy-D-xylulose 5-phosphate + NADPH + H(+). The protein operates within isoprenoid biosynthesis; isopentenyl diphosphate biosynthesis via DXP pathway; isopentenyl diphosphate from 1-deoxy-D-xylulose 5-phosphate: step 1/6. Its function is as follows. Catalyzes the NADPH-dependent rearrangement and reduction of 1-deoxy-D-xylulose-5-phosphate (DXP) to 2-C-methyl-D-erythritol 4-phosphate (MEP). The sequence is that of 1-deoxy-D-xylulose 5-phosphate reductoisomerase from Chlorobium chlorochromatii (strain CaD3).